An 83-amino-acid chain; its full sequence is UPF0512 protein W (83 aa).

The protein belongs to the UPF0512 family.

The chain is UPF0512 protein W from Dictyostelium discoideum (Social amoeba).